The sequence spans 329 residues: Cytochrome f (329 aa).

Residues 1-44 (MKRNIIFLVIHQFENLTMKKKQNIFFIFLLTVFFNFTVNSNVSA) form the signal peptide. Heme contacts are provided by Tyr-45, Cys-65, Cys-68, and His-69. Residues 295-315 (VQGLIIFLITIFITQLFLVLK) form a helical membrane-spanning segment.

Belongs to the cytochrome f family. In terms of assembly, the 4 large subunits of the cytochrome b6-f complex are cytochrome b6, subunit IV (17 kDa polypeptide, petD), cytochrome f and the Rieske protein, while the 4 small subunits are PetG, PetL, PetM and PetN. The complex functions as a dimer. Requires heme as cofactor.

The protein resides in the plastid. The protein localises to the chloroplast thylakoid membrane. Component of the cytochrome b6-f complex, which mediates electron transfer between photosystem II (PSII) and photosystem I (PSI), cyclic electron flow around PSI, and state transitions. This Tupiella akineta (Green alga) protein is Cytochrome f.